Consider the following 601-residue polypeptide: Serine/threonine-protein phosphatase 2A 65 kDa regulatory subunit A beta isoform (601 aa).

N-acetylalanine is present on A2. HEAT repeat units follow at residues 20 to 58 (DSLY…GVER), 59 to 96 (TRTE…GGPD), 97 to 135 (FAHC…TPVA), 136 to 173 (LEAH…ASNA), 174 to 212 (VKAE…ELDS), 213 to 251 (VKTE…SQDD), 252 to 290 (LEAL…GPKI), 291 to 333 (ALSD…RETV), 334 to 372 (IMNQ…GKEN), 373 to 411 (TIEH…GIRQ), 412 to 450 (LSQS…GVEF), 451 to 489 (FDEK…GTEW), 490 to 528 (AQNT…GKEI), 529 to 567 (TTKQ…DTNA), and 568 to 601 (LQGE…LALA).

This sequence belongs to the phosphatase 2A regulatory subunit A family. As to quaternary structure, PP2A consists of a common heterodimeric core enzyme, composed of a 36 kDa catalytic subunit (subunit C) and a 65 kDa constant regulatory subunit (PR65 or subunit A), that associates with a variety of regulatory subunits. Proteins that associate with the core dimer include three families of regulatory subunits B (the R2/B/PR55/B55, R3/B''/PR72/PR130/PR59 and R5/B'/B56 families), the 48 kDa variable regulatory subunit, viral proteins, and cell signaling molecules. Interacts with IPO9. Interacts with SGO1. Interacts with RAF1.

Functionally, the PR65 subunit of protein phosphatase 2A serves as a scaffolding molecule to coordinate the assembly of the catalytic subunit and a variable regulatory B subunit. In Rattus norvegicus (Rat), this protein is Serine/threonine-protein phosphatase 2A 65 kDa regulatory subunit A beta isoform (Ppp2r1b).